Here is a 109-residue protein sequence, read N- to C-terminus: Cytochrome c oxidase subunit 6A1, mitochondrial (109 aa).

A mitochondrion-targeting transit peptide spans 1–24; that stretch reads MAAAAGSRVFGLLGRSRLQLSRCM. Topologically, residues 25-34 are mitochondrial matrix; sequence SSGAHGEEGS. A helical membrane pass occupies residues 35–59; the sequence is ARMWKALTYFVALPGVGVSMLNVFL. Over 60 to 109 the chain is Mitochondrial intermembrane; the sequence is KSHHGEEERPEFVAYPHLRIRSKPFPWGDGNHTLFHNPHVNPLPTGYEDE.

It belongs to the cytochrome c oxidase subunit 6A family. In terms of assembly, component of the cytochrome c oxidase (complex IV, CIV), a multisubunit enzyme composed of 14 subunits. The complex is composed of a catalytic core of 3 subunits MT-CO1, MT-CO2 and MT-CO3, encoded in the mitochondrial DNA, and 11 supernumerary subunits COX4I1 (or COX4I2), COX5A, COX5B, COX6A2 (or COX6A1), COX6B1 (or COX6B2), COX6C, COX7A1 (or COX7A2), COX7B, COX7C, COX8B and NDUFA4, which are encoded in the nuclear genome. The complex exists as a monomer or a dimer and forms supercomplexes (SCs) in the inner mitochondrial membrane with NADH-ubiquinone oxidoreductase (complex I, CI) and ubiquinol-cytochrome c oxidoreductase (cytochrome b-c1 complex, complex III, CIII), resulting in different assemblies (supercomplex SCI(1)III(2)IV(1) and megacomplex MCI(2)III(2)IV(2)).

The protein localises to the mitochondrion inner membrane. It participates in energy metabolism; oxidative phosphorylation. Its function is as follows. Component of the cytochrome c oxidase, the last enzyme in the mitochondrial electron transport chain which drives oxidative phosphorylation. The respiratory chain contains 3 multisubunit complexes succinate dehydrogenase (complex II, CII), ubiquinol-cytochrome c oxidoreductase (cytochrome b-c1 complex, complex III, CIII) and cytochrome c oxidase (complex IV, CIV), that cooperate to transfer electrons derived from NADH and succinate to molecular oxygen, creating an electrochemical gradient over the inner membrane that drives transmembrane transport and the ATP synthase. Cytochrome c oxidase is the component of the respiratory chain that catalyzes the reduction of oxygen to water. Electrons originating from reduced cytochrome c in the intermembrane space (IMS) are transferred via the dinuclear copper A center (CU(A)) of subunit 2 and heme A of subunit 1 to the active site in subunit 1, a binuclear center (BNC) formed by heme A3 and copper B (CU(B)). The BNC reduces molecular oxygen to 2 water molecules unsing 4 electrons from cytochrome c in the IMS and 4 protons from the mitochondrial matrix. The sequence is that of Cytochrome c oxidase subunit 6A1, mitochondrial (COX6A1) from Bos taurus (Bovine).